The primary structure comprises 728 residues: Phosphoribosylformylglycinamidine synthase subunit PurL (728 aa).

Histidine 54 is a catalytic residue. ATP is bound by residues tyrosine 57 and lysine 96. Glutamate 98 contacts Mg(2+). Substrate contacts are provided by residues 99–102 and arginine 121; that span reads SHNH. Residue histidine 100 is the Proton acceptor of the active site. Position 122 (aspartate 122) interacts with Mg(2+). Substrate is bound at residue glutamine 245. Aspartate 273 serves as a coordination point for Mg(2+). 317–319 is a binding site for substrate; sequence ETQ. 2 residues coordinate ATP: aspartate 495 and glycine 532. Position 533 (asparagine 533) interacts with Mg(2+). Serine 535 provides a ligand contact to substrate.

Belongs to the FGAMS family. In terms of assembly, monomer. Part of the FGAM synthase complex composed of 1 PurL, 1 PurQ and 2 PurS subunits.

The protein resides in the cytoplasm. It catalyses the reaction N(2)-formyl-N(1)-(5-phospho-beta-D-ribosyl)glycinamide + L-glutamine + ATP + H2O = 2-formamido-N(1)-(5-O-phospho-beta-D-ribosyl)acetamidine + L-glutamate + ADP + phosphate + H(+). It participates in purine metabolism; IMP biosynthesis via de novo pathway; 5-amino-1-(5-phospho-D-ribosyl)imidazole from N(2)-formyl-N(1)-(5-phospho-D-ribosyl)glycinamide: step 1/2. Part of the phosphoribosylformylglycinamidine synthase complex involved in the purines biosynthetic pathway. Catalyzes the ATP-dependent conversion of formylglycinamide ribonucleotide (FGAR) and glutamine to yield formylglycinamidine ribonucleotide (FGAM) and glutamate. The FGAM synthase complex is composed of three subunits. PurQ produces an ammonia molecule by converting glutamine to glutamate. PurL transfers the ammonia molecule to FGAR to form FGAM in an ATP-dependent manner. PurS interacts with PurQ and PurL and is thought to assist in the transfer of the ammonia molecule from PurQ to PurL. The sequence is that of Phosphoribosylformylglycinamidine synthase subunit PurL from Macrococcus caseolyticus (strain JCSC5402) (Macrococcoides caseolyticum).